We begin with the raw amino-acid sequence, 37 residues long: Defensin-A (37 aa).

Intrachain disulfides connect cysteine 4-cysteine 25, cysteine 10-cysteine 33, and cysteine 14-cysteine 35.

It localises to the secreted. In terms of biological role, has antibacterial activity against M.luteus and E.coli. The polypeptide is Defensin-A (Mytilus edulis (Blue mussel)).